Consider the following 443-residue polypeptide: Xaa-Pro dipeptidase (443 aa).

Mn(2+) is bound by residues D241, D252, H333, E378, and E417.

The protein belongs to the peptidase M24B family. Bacterial-type prolidase subfamily. Mn(2+) serves as cofactor.

It carries out the reaction Xaa-L-Pro dipeptide + H2O = an L-alpha-amino acid + L-proline. Splits dipeptides with a prolyl residue in the C-terminal position. This is Xaa-Pro dipeptidase from Actinobacillus pleuropneumoniae serotype 5b (strain L20).